Consider the following 132-residue polypeptide: MSVNDPLGDMLTRIRNALMRNKRAVNTPASALRRRVLDVLKSEGYIRDYAEVEHASGLKEFEIELKYFEGDSVISEIKRISKPGRRVYSGVKDLPLVQNGLGIAILSTPKGVMSDSTARESNVGGEILCHVS.

It belongs to the universal ribosomal protein uS8 family. Part of the 30S ribosomal subunit. Contacts proteins S5 and S12.

Functionally, one of the primary rRNA binding proteins, it binds directly to 16S rRNA central domain where it helps coordinate assembly of the platform of the 30S subunit. In Maricaulis maris (strain MCS10) (Caulobacter maris), this protein is Small ribosomal subunit protein uS8.